The sequence spans 194 residues: Casparian strip membrane protein 2 (194 aa).

Residues M1–G32 are Cytoplasmic-facing. Residues V33–A53 traverse the membrane as a helical segment. Over T54–Q82 the chain is Extracellular. Residues F83 to V103 form a helical membrane-spanning segment. Over V104–R115 the chain is Cytoplasmic. A helical membrane pass occupies residues L116–A136. Residues A137–S168 lie on the Extracellular side of the membrane. The chain crosses the membrane as a helical span at residues A169–L189. Residues A190–P194 lie on the Cytoplasmic side of the membrane.

The protein belongs to the Casparian strip membrane proteins (CASP) family. Homodimer and heterodimers.

It localises to the cell membrane. Functionally, regulates membrane-cell wall junctions and localized cell wall deposition. Required for establishment of the Casparian strip membrane domain (CSD) and the subsequent formation of Casparian strips, a cell wall modification of the root endodermis that determines an apoplastic barrier between the intraorganismal apoplasm and the extraorganismal apoplasm and prevents lateral diffusion. This is Casparian strip membrane protein 2 from Vigna unguiculata (Cowpea).